The chain runs to 375 residues: Alanine racemase (375 aa).

Lys-41 functions as the Proton acceptor; specific for D-alanine in the catalytic mechanism. The residue at position 41 (Lys-41) is an N6-(pyridoxal phosphate)lysine. A substrate-binding site is contributed by Arg-141. Residue Tyr-270 is the Proton acceptor; specific for L-alanine of the active site. Residue Met-317 coordinates substrate.

It belongs to the alanine racemase family. Pyridoxal 5'-phosphate is required as a cofactor.

The catalysed reaction is L-alanine = D-alanine. Its pathway is amino-acid biosynthesis; D-alanine biosynthesis; D-alanine from L-alanine: step 1/1. Catalyzes the interconversion of L-alanine and D-alanine. May also act on other amino acids. The polypeptide is Alanine racemase (alr) (Lactiplantibacillus plantarum (strain ATCC BAA-793 / NCIMB 8826 / WCFS1) (Lactobacillus plantarum)).